We begin with the raw amino-acid sequence, 36 residues long: Photosystem II reaction center protein M (36 aa).

Residues 5–25 form a helical membrane-spanning segment; that stretch reads ILAFIATALFILVPTAFLLII.

The protein belongs to the PsbM family. PSII is composed of 1 copy each of membrane proteins PsbA, PsbB, PsbC, PsbD, PsbE, PsbF, PsbH, PsbI, PsbJ, PsbK, PsbL, PsbM, PsbT, PsbX, PsbY, PsbZ, Psb30/Ycf12, at least 3 peripheral proteins of the oxygen-evolving complex and a large number of cofactors. It forms dimeric complexes.

The protein localises to the plastid. The protein resides in the chloroplast thylakoid membrane. Functionally, one of the components of the core complex of photosystem II (PSII). PSII is a light-driven water:plastoquinone oxidoreductase that uses light energy to abstract electrons from H(2)O, generating O(2) and a proton gradient subsequently used for ATP formation. It consists of a core antenna complex that captures photons, and an electron transfer chain that converts photonic excitation into a charge separation. This subunit is found at the monomer-monomer interface. The polypeptide is Photosystem II reaction center protein M (Panax ginseng (Korean ginseng)).